A 413-amino-acid chain; its full sequence is Gamma-glutamyl phosphate reductase (413 aa).

The protein belongs to the gamma-glutamyl phosphate reductase family.

The protein resides in the cytoplasm. The enzyme catalyses L-glutamate 5-semialdehyde + phosphate + NADP(+) = L-glutamyl 5-phosphate + NADPH + H(+). Its pathway is amino-acid biosynthesis; L-proline biosynthesis; L-glutamate 5-semialdehyde from L-glutamate: step 2/2. Its function is as follows. Catalyzes the NADPH-dependent reduction of L-glutamate 5-phosphate into L-glutamate 5-semialdehyde and phosphate. The product spontaneously undergoes cyclization to form 1-pyrroline-5-carboxylate. The chain is Gamma-glutamyl phosphate reductase from Anoxybacillus flavithermus (strain DSM 21510 / WK1).